The primary structure comprises 537 residues: Tyrosine-protein kinase Fyn (537 aa).

A lipid anchor (N-myristoyl glycine) is attached at G2. Residues C3 and C6 are each lipidated (S-palmitoyl cysteine). At T12 the chain carries Phosphothreonine; by PKC. The interval 14–35 (LTEERDGSLNQSSGYRYGTDPT) is disordered. Phosphoserine is present on residues S21 and S26. The SH3 domain maps to 82 to 143 (TGVTLFVALY…PSNYVAPVDS (62 aa)). Positions 149–246 (WYFGKLGRKD…GLCCRLVVPC (98 aa)) constitute an SH2 domain. Y185 bears the Phosphotyrosine mark. One can recognise a Protein kinase domain in the interval 271 to 524 (LQLIKRLGNG…YLQGFLEDYF (254 aa)). Residues 277–285 (LGNGQFGEV) and K299 each bind ATP. D390 (proton acceptor) is an active-site residue. The residue at position 420 (Y420) is a Phosphotyrosine; by autocatalysis. A Phosphotyrosine; by CSK modification is found at Y531.

The protein belongs to the protein kinase superfamily. Tyr protein kinase family. SRC subfamily. In terms of assembly, interacts (via its SH3 domain) with PIK3R1 and PRMT8. Interacts with FYB1, PAG1, and SH2D1A. Interacts with CD79A (tyrosine-phosphorylated form); the interaction increases FYN activity. Interacts (via SH2 domain) with CSF1R (tyrosine phosphorylated). Interacts with TOM1L1 (phosphorylated form). Interacts with KDR (tyrosine phosphorylated). Interacts (via SH3 domain) with KLHL2 (via N-terminus). Interacts with SH2D1A and SLAMF1. Interacts with ITCH; the interaction phosphorylates ITCH and negatively regulates its activity. Interacts with FASLG. Interacts with RUNX3. Interacts with KIT. Interacts with EPHA8; possible downstream effector of EPHA8 in regulation of cell adhesion. Interacts with PTK2/FAK1; this interaction leads to PTK2/FAK1 phosphorylation and activation. Interacts with CAV1; this interaction couples integrins to the Ras-ERK pathway. Interacts with UNC119. Interacts (via SH2 domain) with PTPRH (phosphorylated form). Interacts with PTPRO (phosphorylated form). Interacts with PTPRB (phosphorylated form). Interacts with FYB2. Interacts with DSCAM. Interacts with SKAP1 and FYB1; this interaction promotes the phosphorylation of CLNK. Interacts with NEDD9; in the presence of PTK2. Mn(2+) is required as a cofactor. Autophosphorylated at Tyr-420. Phosphorylation on the C-terminal tail at Tyr-531 by CSK maintains the enzyme in an inactive state. PTPRC/CD45 dephosphorylates Tyr-531 leading to activation. Ultraviolet B (UVB) strongly increase phosphorylation at Thr-12 and kinase activity, and promotes translocation from the cytoplasm to the nucleus. Dephosphorylation at Tyr-420 by PTPN2 negatively regulates T-cell receptor signaling. Phosphorylated at tyrosine residues, which can be enhanced by NTN1. Post-translationally, palmitoylated. Palmitoylation at Cys-3 and Cys-6, probably by ZDHHC21, regulates subcellular location.

Its subcellular location is the cytoplasm. It localises to the nucleus. The protein localises to the cell membrane. The protein resides in the perikaryon. The enzyme catalyses L-tyrosyl-[protein] + ATP = O-phospho-L-tyrosyl-[protein] + ADP + H(+). With respect to regulation, inhibited by phosphorylation of Tyr-531 by leukocyte common antigen and activated by dephosphorylation of this site. Functionally, non-receptor tyrosine-protein kinase that plays a role in many biological processes including regulation of cell growth and survival, cell adhesion, integrin-mediated signaling, cytoskeletal remodeling, cell motility, immune response and axon guidance. Inactive FYN is phosphorylated on its C-terminal tail within the catalytic domain. Following activation by PKA, the protein subsequently associates with PTK2/FAK1, allowing PTK2/FAK1 phosphorylation, activation and targeting to focal adhesions. Involved in the regulation of cell adhesion and motility through phosphorylation of CTNNB1 (beta-catenin) and CTNND1 (delta-catenin). Regulates cytoskeletal remodeling by phosphorylating several proteins including the actin regulator WAS and the microtubule-associated proteins MAP2 and MAPT. Promotes cell survival by phosphorylating AGAP2/PIKE-A and preventing its apoptotic cleavage. Participates in signal transduction pathways that regulate the integrity of the glomerular slit diaphragm (an essential part of the glomerular filter of the kidney) by phosphorylating several slit diaphragm components including NPHS1, KIRREL1 and TRPC6. Plays a role in neural processes by phosphorylating DPYSL2, a multifunctional adapter protein within the central nervous system, ARHGAP32, a regulator for Rho family GTPases implicated in various neural functions, and SNCA, a small pre-synaptic protein. Involved in reelin signaling by mediating phosphorylation of DAB1 following reelin (RELN)-binding to its receptor. Participates in the downstream signaling pathways that lead to T-cell differentiation and proliferation following T-cell receptor (TCR) stimulation. Phosphorylates PTK2B/PYK2 in response to T-cell receptor activation. Also participates in negative feedback regulation of TCR signaling through phosphorylation of PAG1, thereby promoting interaction between PAG1 and CSK and recruitment of CSK to lipid rafts. CSK maintains LCK and FYN in an inactive form. Promotes CD28-induced phosphorylation of VAV1. In mast cells, phosphorylates CLNK after activation of immunoglobulin epsilon receptor signaling. Can also promote CD244-mediated NK cell activation. In Bos taurus (Bovine), this protein is Tyrosine-protein kinase Fyn.